The sequence spans 458 residues: Pentatricopeptide repeat-containing protein At1g77405 (458 aa).

7 PPR repeats span residues 164-198 (TTASITCLMKCLGEEGFVKEALATFYRMKEYHCKP), 199-233 (DVYAYNTIINALCRVGNFKKARFLLDQMQLPGFRY), 236-271 (DTYTYTILISSYCRYGMQTGCRKAIRRRMWEANRMF), 282-316 (DVVTYNCLIDGCCKTNRIGRALELFEDMKTKGCVP), 317-351 (NQVTYNSFIRYYSVTNEIEGAIEMMRTMKKLGHGV), 353-387 (GSSTYTPLIHALVETRRAAEARDLVVEMVEAGLVP), and 388-419 (REYTYKLVCDALSSEGLASTLDEELHKRMREG).

The protein belongs to the PPR family. P subfamily.

This is Pentatricopeptide repeat-containing protein At1g77405 from Arabidopsis thaliana (Mouse-ear cress).